The sequence spans 156 residues: Snaclec trimecetin subunit alpha (156 aa).

The signal sequence occupies residues 1-23; sequence MGRFIFVSFGLLVVFLSLSGTGA. Disulfide bonds link C25/C36, C53/C150, and C125/C142. Residues 32-151 enclose the C-type lectin domain; sequence FRRYCYKPFK…CGERNLFMCK (120 aa).

The protein belongs to the snaclec family. Heterodimer of subunits alpha and beta; disulfide-linked. As to expression, expressed by the venom gland.

It is found in the secreted. Snaclec that induces platelet aggregation in either human platelet rich plasma (PRP) or washed platelet suspensions. It causes aggregation in a dose-dependent manner even in the absence of various platelet agonists such as ADP or von Willebrand factor (vWF). Interestingly, it does not induce aggregation in rabbit PRP. A monoclonal antibody against the platelet GPIb receptor blocks the aggregation induced by trimecetin, suggesting that it acts by binding to GPIb (GP1BA/GP1BB). The polypeptide is Snaclec trimecetin subunit alpha (Protobothrops mucrosquamatus (Taiwan habu)).